A 615-amino-acid polypeptide reads, in one-letter code: Chaperone protein HtpG (615 aa).

Residues 1–335 (MSAEKQTHGF…APDLPLNVSR (335 aa)) form an a; substrate-binding region. The tract at residues 336–541 (ELLQDYGPVQ…EDQLGPQMRR (206 aa)) is b. Residues 542 to 615 (MLEAAGQPVP…RMQALLSQSV (74 aa)) form a c region.

This sequence belongs to the heat shock protein 90 family. In terms of assembly, homodimer.

Its subcellular location is the cytoplasm. Functionally, molecular chaperone. Has ATPase activity. The protein is Chaperone protein HtpG of Alcanivorax borkumensis (strain ATCC 700651 / DSM 11573 / NCIMB 13689 / SK2).